The chain runs to 208 residues: Small ribosomal subunit protein uS4 (208 aa).

The S4 RNA-binding domain occupies 97-158; that stretch reads TRLDNVIYRM…RAQKYLCVQE (62 aa).

The protein belongs to the universal ribosomal protein uS4 family. As to quaternary structure, part of the 30S ribosomal subunit. Contacts protein S5. The interaction surface between S4 and S5 is involved in control of translational fidelity.

Functionally, one of the primary rRNA binding proteins, it binds directly to 16S rRNA where it nucleates assembly of the body of the 30S subunit. In terms of biological role, with S5 and S12 plays an important role in translational accuracy. This is Small ribosomal subunit protein uS4 from Xylella fastidiosa (strain 9a5c).